Consider the following 632-residue polypeptide: Armadillo repeat-containing X-linked protein 2 (632 aa).

The Mitochondrial intermembrane portion of the chain corresponds to 1–6; that stretch reads MSRVRD. Residues 1-6 are mitochondrion outer membrane (MOM)-targeting sequence; the sequence is MSRVRD. Residues 7 to 25 form a helical; Signal-anchor membrane-spanning segment; the sequence is AGCVAAGIVIGAGAWYCVY. Residues 26–40 are mitochondrion outer membrane (MOM)-targeting sequence; the sequence is KYTRGRDQTKKRMAK. The Cytoplasmic portion of the chain corresponds to 26 to 632; that stretch reads KYTRGRDQTK…VKVIKLVNKF (607 aa). 3 disordered regions span residues 68–124, 160–304, and 335–369; these read GFSP…AGVG, APKV…KVEV, and VPDS…RPVA. Low complexity-rich tracts occupy residues 86–120 and 211–241; these read EASA…EADG and VASP…SPGT. Residues 336–356 show a composition bias toward acidic residues; the sequence is PDSEEGESGWTDTESDSDSEP. ARM repeat units follow at residues 376–416, 418–457, and 498–537; these read PYEI…NNAN, SCNQ…NLSE, and ITND…NFAE.

Belongs to the eutherian X-chromosome-specific Armcx family. Expressed at high levels ovary, heart, testis, prostate, brain, spleen and colon. Expressed at very low levels in liver and thymus. Not expressed in peripheral blood leukocytes. Not expressed in pancreas and ovarian carcinomas.

The protein resides in the mitochondrion. The protein localises to the mitochondrion outer membrane. May regulate the dynamics and distribution of mitochondria in neural cells. The protein is Armadillo repeat-containing X-linked protein 2 (ARMCX2) of Homo sapiens (Human).